Consider the following 118-residue polypeptide: Ribonuclease P protein component (118 aa).

Belongs to the RnpA family. Consists of a catalytic RNA component (M1 or rnpB) and a protein subunit.

The enzyme catalyses Endonucleolytic cleavage of RNA, removing 5'-extranucleotides from tRNA precursor.. Its function is as follows. RNaseP catalyzes the removal of the 5'-leader sequence from pre-tRNA to produce the mature 5'-terminus. It can also cleave other RNA substrates such as 4.5S RNA. The protein component plays an auxiliary but essential role in vivo by binding to the 5'-leader sequence and broadening the substrate specificity of the ribozyme. In Shewanella baltica (strain OS155 / ATCC BAA-1091), this protein is Ribonuclease P protein component.